We begin with the raw amino-acid sequence, 597 residues long: Putative lipase ATG15 (597 aa).

Residues 1-15 (MTLEKNRHANKGTSW) are Cytoplasmic-facing. The helical; Signal-anchor for type II membrane protein transmembrane segment at 16 to 36 (TWMIYKFVVGVITVAILVLFI) threads the bilayer. The Lumenal segment spans residues 37–597 (TQKSVSQAQD…DDDEDTFERK (561 aa)). N-linked (GlcNAc...) asparagine glycans are attached at residues Asn-195, Asn-262, and Asn-346. Ser-364 acts as the Charge relay system in catalysis. Asn-481 carries N-linked (GlcNAc...) asparagine glycosylation. A disordered region spans residues 507 to 570 (EKDEPKLPNP…PTDQDPPKKC (64 aa)). Residues 519–554 (SSSKSTLSTKTTSLKSSSTYSGSTSSSTVTKTTQTS) show a composition bias toward low complexity.

The protein belongs to the AB hydrolase superfamily. Lipase family. As to quaternary structure, binds to both phosphatidylinositol (PI) and phosphatidylinositol 3,5-bisphosphate (PIP2).

Its subcellular location is the endosome. The protein localises to the multivesicular body membrane. It localises to the prevacuolar compartment membrane. It carries out the reaction a triacylglycerol + H2O = a diacylglycerol + a fatty acid + H(+). Lipase which is essential for lysis of subvacuolar cytoplasm to vacuole targeted bodies and intravacuolar autophagic bodies. Involved in the lysis of intravacuolar multivesicular body (MVB) vesicles. The intravacuolar membrane disintegration by ATG15 is critical to life span extension. The polypeptide is Putative lipase ATG15 (ATG15) (Candida albicans (strain SC5314 / ATCC MYA-2876) (Yeast)).